Consider the following 121-residue polypeptide: UPF0295 protein OB0906 (121 aa).

2 helical membrane-spanning segments follow: residues 14 to 34 (IRTF…GGIL) and 43 to 63 (VIFF…YVWI).

This sequence belongs to the UPF0295 family.

Its subcellular location is the cell membrane. This is UPF0295 protein OB0906 from Oceanobacillus iheyensis (strain DSM 14371 / CIP 107618 / JCM 11309 / KCTC 3954 / HTE831).